We begin with the raw amino-acid sequence, 292 residues long: Probable 2-(5''-triphosphoribosyl)-3'-dephosphocoenzyme-A synthase (292 aa).

It belongs to the CitG/MdcB family.

It catalyses the reaction 3'-dephospho-CoA + ATP = 2'-(5''-triphospho-alpha-D-ribosyl)-3'-dephospho-CoA + adenine. In Shigella sonnei (strain Ss046), this protein is Probable 2-(5''-triphosphoribosyl)-3'-dephosphocoenzyme-A synthase.